The primary structure comprises 401 residues: Glycerol-3-phosphate dehydrogenase [NAD(+)] 1 (401 aa).

NAD(+) is bound by residues 40-45, phenylalanine 128, lysine 151, and alanine 184; that span reads GSGNWG. Lysine 151 contributes to the substrate binding site. The active-site Proton acceptor is lysine 244. 2 residues coordinate NAD(+): arginine 309 and glutamine 338. 309–310 contributes to the substrate binding site; that stretch reads RN.

Belongs to the NAD-dependent glycerol-3-phosphate dehydrogenase family.

Its subcellular location is the cytoplasm. It catalyses the reaction sn-glycerol 3-phosphate + NAD(+) = dihydroxyacetone phosphate + NADH + H(+). The chain is Glycerol-3-phosphate dehydrogenase [NAD(+)] 1 (GPD1) from Zygosaccharomyces rouxii.